The primary structure comprises 179 residues: Large ribosomal subunit protein uL5 (179 aa).

The protein belongs to the universal ribosomal protein uL5 family. As to quaternary structure, part of the 50S ribosomal subunit; part of the 5S rRNA/L5/L18/L25 subcomplex. Contacts the 5S rRNA and the P site tRNA. Forms a bridge to the 30S subunit in the 70S ribosome.

Functionally, this is one of the proteins that bind and probably mediate the attachment of the 5S RNA into the large ribosomal subunit, where it forms part of the central protuberance. In the 70S ribosome it contacts protein S13 of the 30S subunit (bridge B1b), connecting the 2 subunits; this bridge is implicated in subunit movement. Contacts the P site tRNA; the 5S rRNA and some of its associated proteins might help stabilize positioning of ribosome-bound tRNAs. The chain is Large ribosomal subunit protein uL5 from Dictyoglomus thermophilum (strain ATCC 35947 / DSM 3960 / H-6-12).